Consider the following 358-residue polypeptide: Glutamine synthetase (358 aa).

Residues 25–104 enclose the GS beta-grasp domain; it reads VQAEYIWIDA…VLCECYDNDG (80 aa). In terms of domain architecture, GS catalytic spans 111-358; that stretch reads YRAHCKKVMD…ILVETTVLNN (248 aa).

This sequence belongs to the glutamine synthetase family. As to quaternary structure, homooctamer.

It localises to the cytoplasm. The catalysed reaction is L-glutamate + NH4(+) + ATP = L-glutamine + ADP + phosphate + H(+). The sequence is that of Glutamine synthetase (GLN1) from Cryptococcus neoformans var. neoformans serotype D (strain B-3501A) (Filobasidiella neoformans).